Reading from the N-terminus, the 306-residue chain is 5'-hydroxyaverantin dehydrogenase (306 aa).

Ser-25, Ile-27, Gln-48, Lys-52, and Asp-73 together coordinate NADP(+). Ser-173 (proton donor) is an active-site residue. The NADP(+) site is built by Tyr-187, Lys-191, Val-220, and Thr-222. The Proton acceptor role is filled by Tyr-187. Lys-191 functions as the Lowers pKa of active site Tyr in the catalytic mechanism.

This sequence belongs to the short-chain dehydrogenases/reductases (SDR) family. As to quaternary structure, homodimer.

Its subcellular location is the cytoplasm. It localises to the cytosol. The catalysed reaction is (1'S,5'S)-5'-hydroxyaverantin + NAD(+) = (S)-5'-oxoaverantin + NADH + H(+). The enzyme catalyses (1'S,5'R)-5'-hydroxyaverantin + NAD(+) = (S)-5'-oxoaverantin + NADH + 2 H(+). Its pathway is mycotoxin biosynthesis. Its function is as follows. 5'-hydroxyaverantin dehydrogenase; part of the fragmented gene cluster that mediates the biosynthesis of dothistromin (DOTH), a polyketide toxin very similar in structure to the aflatoxin precursor, versicolorin B. The first step of the pathway is the conversion of acetate to norsolorinic acid (NOR) and requires the fatty acid synthase subunits hexA and hexB, as well as the polyketide synthase pksA. PksA combines a hexanoyl starter unit and 7 malonyl-CoA extender units to synthesize the precursor NOR. The hexanoyl starter unit is provided to the acyl-carrier protein (ACP) domain by the fungal fatty acid synthase hexA/hexB. The second step is the conversion of NOR to averantin (AVN) and requires the norsolorinic acid ketoreductase nor1, which catalyzes the dehydration of norsolorinic acid to form (1'S)-averantin. The cytochrome P450 monooxygenase avnA then catalyzes the hydroxylation of AVN to 5'hydroxyaverantin (HAVN). The next step is performed by adhA that transforms HAVN to averufin (AVF). Averufin might then be converted to hydroxyversicolorone by cypX and avfA. Hydroxyversicolorone is further converted versiconal hemiacetal acetate (VHA) by moxY. VHA is then the substrate for the versiconal hemiacetal acetate esterase est1 to yield versiconal (VAL). Versicolorin B synthase vbsA then converts VAL to versicolorin B (VERB) by closing the bisfuran ring. Then, the activity of the versicolorin B desaturase verB leads to versicolorin A (VERA). DotB, a predicted chloroperoxidase, may perform epoxidation of the A-ring of VERA. Alternatively, a cytochrome P450, such as cypX or avnA could catalyze this step. It is also possible that another, uncharacterized, cytochrome P450 enzyme is responsible for this step. Opening of the epoxide could potentially be achieved by the epoxide hydrolase epoA. However, epoA seems not to be required for DOTH biosynthesis, but other epoxide hydrolases may have the ability to complement this hydrolysis. Alternatively, opening of the epoxide ring could be achieved non-enzymatically. The next step is the deoxygenation of ring A to yield the 5,8-dihydroxyanthraquinone which is most likely catalyzed by the NADPH dehydrogenase encoded by ver1. The last stages of DOTH biosynthesis are proposed to involve hydroxylation of the bisfuran. OrdB and norB might have oxidative roles here. An alternative possibility is that cytochrome P450 monoogenases such as avnA and cypX might perform these steps in addition to previously proposed steps. In Dothistroma septosporum (strain NZE10 / CBS 128990) (Red band needle blight fungus), this protein is 5'-hydroxyaverantin dehydrogenase.